The chain runs to 305 residues: Acetyl-coenzyme A carboxylase carboxyl transferase subunit beta (305 aa).

Residues 27–296 (LWVKCSSCRE…SPAKAELAGR (270 aa)) enclose the CoA carboxyltransferase N-terminal domain. Cys-31, Cys-34, Cys-50, and Cys-53 together coordinate Zn(2+). A C4-type zinc finger spans residues 31–53 (CSSCRELIYKKQLNDNLKVCPKC).

This sequence belongs to the AccD/PCCB family. As to quaternary structure, acetyl-CoA carboxylase is a heterohexamer composed of biotin carboxyl carrier protein (AccB), biotin carboxylase (AccC) and two subunits each of ACCase subunit alpha (AccA) and ACCase subunit beta (AccD). It depends on Zn(2+) as a cofactor.

The protein resides in the cytoplasm. The enzyme catalyses N(6)-carboxybiotinyl-L-lysyl-[protein] + acetyl-CoA = N(6)-biotinyl-L-lysyl-[protein] + malonyl-CoA. The protein operates within lipid metabolism; malonyl-CoA biosynthesis; malonyl-CoA from acetyl-CoA: step 1/1. Its function is as follows. Component of the acetyl coenzyme A carboxylase (ACC) complex. Biotin carboxylase (BC) catalyzes the carboxylation of biotin on its carrier protein (BCCP) and then the CO(2) group is transferred by the transcarboxylase to acetyl-CoA to form malonyl-CoA. This Chloroflexus aurantiacus (strain ATCC 29366 / DSM 635 / J-10-fl) protein is Acetyl-coenzyme A carboxylase carboxyl transferase subunit beta.